Consider the following 248-residue polypeptide: Probable aquaporin TIP2-2 (248 aa).

The next 2 membrane-spanning stretches (helical) occupy residues 21-41 and 55-75; these read AYVA…GSAI and AGLV…VAIG. The NPA 1 motif lies at 84-86; sequence NPA. Helical transmembrane passes span 87 to 109, 133 to 153, and 168 to 188; these read VTFG…WIAQ, LSGV…FGLV, and LGTI…LVAG. The short motif at 196–198 is the NPA 2 element; the sequence is NPA. A helical membrane pass occupies residues 210–230; sequence YTNIWIYWVGPLVGGGLAGLV.

The protein belongs to the MIP/aquaporin (TC 1.A.8) family. TIP (TC 1.A.8.10) subfamily. In terms of tissue distribution, expressed in roots and leaves.

It is found in the vacuole membrane. Functionally, aquaporins facilitate the transport of water and small neutral solutes across cell membranes. May be involved in transport from the vacuolar compartment to the cytoplasm. The chain is Probable aquaporin TIP2-2 (TIP2-2) from Oryza sativa subsp. japonica (Rice).